Reading from the N-terminus, the 507-residue chain is ATP synthase subunit beta (507 aa).

Residues 1–22 are disordered; sequence MSSLANKAKSKGKSSKSKSNVN. 183–190 contacts ATP; the sequence is GGAGVGKT.

This sequence belongs to the ATPase alpha/beta chains family. As to quaternary structure, F-type ATPases have 2 components, CF(1) - the catalytic core - and CF(0) - the membrane proton channel. CF(1) has five subunits: alpha(3), beta(3), gamma(1), delta(1), epsilon(1). CF(0) has three main subunits: a(1), b(2) and c(9-12). The alpha and beta chains form an alternating ring which encloses part of the gamma chain. CF(1) is attached to CF(0) by a central stalk formed by the gamma and epsilon chains, while a peripheral stalk is formed by the delta and b chains.

The protein localises to the cell inner membrane. It carries out the reaction ATP + H2O + 4 H(+)(in) = ADP + phosphate + 5 H(+)(out). Functionally, produces ATP from ADP in the presence of a proton gradient across the membrane. The catalytic sites are hosted primarily by the beta subunits. This is ATP synthase subunit beta from Ehrlichia canis (strain Jake).